The following is a 404-amino-acid chain: Cysteine desulfurase IscS (404 aa).

Residues Ala-75–Thr-76, Asn-155, Gln-183, and Ser-203–His-205 contribute to the pyridoxal 5'-phosphate site. Lys-206 carries the N6-(pyridoxal phosphate)lysine modification. Residue Thr-243 coordinates pyridoxal 5'-phosphate. Cys-328 acts as the Cysteine persulfide intermediate in catalysis. Cys-328 serves as a coordination point for [2Fe-2S] cluster.

Belongs to the class-V pyridoxal-phosphate-dependent aminotransferase family. NifS/IscS subfamily. In terms of assembly, homodimer. Forms a heterotetramer with IscU, interacts with other sulfur acceptors. Requires pyridoxal 5'-phosphate as cofactor.

The protein resides in the cytoplasm. It catalyses the reaction (sulfur carrier)-H + L-cysteine = (sulfur carrier)-SH + L-alanine. Its pathway is cofactor biosynthesis; iron-sulfur cluster biosynthesis. In terms of biological role, master enzyme that delivers sulfur to a number of partners involved in Fe-S cluster assembly, tRNA modification or cofactor biosynthesis. Catalyzes the removal of elemental sulfur atoms from cysteine to produce alanine. Functions as a sulfur delivery protein for Fe-S cluster synthesis onto IscU, an Fe-S scaffold assembly protein, as well as other S acceptor proteins. The protein is Cysteine desulfurase IscS of Shewanella frigidimarina (strain NCIMB 400).